Consider the following 131-residue polypeptide: Small ribosomal subunit protein uS11 (131 aa).

The protein belongs to the universal ribosomal protein uS11 family. In terms of assembly, part of the 30S ribosomal subunit. Interacts with proteins S7 and S18. Binds to IF-3.

Located on the platform of the 30S subunit, it bridges several disparate RNA helices of the 16S rRNA. Forms part of the Shine-Dalgarno cleft in the 70S ribosome. The protein is Small ribosomal subunit protein uS11 of Buchnera aphidicola subsp. Acyrthosiphon pisum (strain 5A).